The primary structure comprises 82 residues: Small ribosomal subunit protein bS16 (82 aa).

It belongs to the bacterial ribosomal protein bS16 family.

The protein is Small ribosomal subunit protein bS16 of Glaesserella parasuis serovar 5 (strain SH0165) (Haemophilus parasuis).